A 317-amino-acid chain; its full sequence is Secreted mono- and diacylglycerol lipase 3 (317 aa).

The N-terminal stretch at 1–29 (MMFADDLVRMAVLRFITVALAAITNVANA) is a signal peptide. Cysteine 61 and cysteine 310 are joined by a disulfide. Residue asparagine 108 is glycosylated (N-linked (GlcNAc...) asparagine). Serine 175 (nucleophile) is an active-site residue. N-linked (GlcNAc...) asparagine glycosylation occurs at asparagine 194. Residue aspartate 234 is part of the active site. An N-linked (GlcNAc...) asparagine glycan is attached at asparagine 258. Histidine 294 is an active-site residue.

Belongs to the AB hydrolase superfamily. Lipase family. Class 3 subfamily.

It localises to the secreted. The catalysed reaction is a monoacylglycerol + H2O = glycerol + a fatty acid + H(+). The enzyme catalyses a diacylglycerol + H2O = a monoacylglycerol + a fatty acid + H(+). Functionally, secreted mono- and diacylglycerol lipase involved in plant virulence. Has a substrate preference for p-nitrophenyl esters with a carbon chain length of C10 (p-nitrophenyl caprate). This is Secreted mono- and diacylglycerol lipase 3 from Gibberella zeae (strain ATCC MYA-4620 / CBS 123657 / FGSC 9075 / NRRL 31084 / PH-1) (Wheat head blight fungus).